The following is a 173-amino-acid chain: Ribosome maturation factor RimM (173 aa).

In terms of domain architecture, PRC barrel spans 96-169; it reads PDEYYDHQLE…LVEIDPPEGL (74 aa).

It belongs to the RimM family. As to quaternary structure, binds ribosomal protein uS19.

Its subcellular location is the cytoplasm. In terms of biological role, an accessory protein needed during the final step in the assembly of 30S ribosomal subunit, possibly for assembly of the head region. Essential for efficient processing of 16S rRNA. May be needed both before and after RbfA during the maturation of 16S rRNA. It has affinity for free ribosomal 30S subunits but not for 70S ribosomes. The sequence is that of Ribosome maturation factor RimM from Mycobacterium sp. (strain JLS).